A 68-amino-acid polypeptide reads, in one-letter code: Alpha-conotoxin-like Lp1.2 (68 aa).

An N-terminal signal peptide occupies residues 1–21 (MGMRMMFTVFLLVVLATTVVS). A propeptide spanning residues 22-48 (FTSDRAFDGRNAAASDKASDLISLAVR) is cleaved from the precursor. Cystine bridges form between C50–C56 and C51–C64. Residues 52–54 (SHP) are ser-Xaa-Pro motif, crucial for potent interaction with nAChR. At C64 the chain carries Cysteine amide. A propeptide spanning residues 65–68 (GGKR) is cleaved from the precursor.

Belongs to the conotoxin A superfamily. In terms of tissue distribution, expressed by the venom duct.

The protein resides in the secreted. In terms of biological role, alpha-conotoxins act on postsynaptic membranes, they bind to the nicotinic acetylcholine receptors (nAChR) and thus inhibit them. The sequence is that of Alpha-conotoxin-like Lp1.2 from Conus leopardus (Leopard cone).